Here is a 422-residue protein sequence, read N- to C-terminus: Phytoene synthase, chloroplastic (422 aa).

The N-terminal 83 residues, 1-83, are a transit peptide targeting the chloroplast; that stretch reads MSLASSLVVS…GSVIVASMVA (83 aa).

Belongs to the phytoene/squalene synthase family. In terms of assembly, monomer.

The protein localises to the plastid. It is found in the chloroplast. The enzyme catalyses 2 (2E,6E,10E)-geranylgeranyl diphosphate = 15-cis-phytoene + 2 diphosphate. It participates in carotenoid biosynthesis; phytoene biosynthesis; all-trans-phytoene from geranylgeranyl diphosphate: step 1/1. Functionally, catalyzes the reaction from prephytoene diphosphate to phytoene. The sequence is that of Phytoene synthase, chloroplastic (PSY) from Cucumis melo (Muskmelon).